Consider the following 130-residue polypeptide: ER membrane protein complex subunit 5 (130 aa).

The Cytoplasmic portion of the chain corresponds to 1–3 (MAS). Residues 4-22 (SFWKGVVGIGLFALAHAAF) traverse the membrane as a helical segment. Topologically, residues 23–43 (SAAQHRSYMRLTEKENETLPI) are lumenal. A helical transmembrane segment spans residues 44–63 (DIVLQTLLSFVITCYGIVHI). The Cytoplasmic segment spans residues 64-130 (SGEFKDMDAS…LRLRKLENFH (67 aa)).

Belongs to the membrane magnesium transporter (TC 1.A.67) family. In terms of assembly, component of the ER membrane protein complex (EMC).

The protein resides in the endoplasmic reticulum membrane. It localises to the golgi apparatus membrane. Its subcellular location is the early endosome membrane. Its function is as follows. Part of the endoplasmic reticulum membrane protein complex (EMC) that enables the energy-independent insertion into endoplasmic reticulum membranes of newly synthesized membrane proteins. Preferentially accommodates proteins with transmembrane domains that are weakly hydrophobic or contain destabilizing features such as charged and aromatic residues. Involved in the cotranslational insertion of multi-pass membrane proteins in which stop-transfer membrane-anchor sequences become ER membrane spanning helices. It is also required for the post-translational insertion of tail-anchored/TA proteins in endoplasmic reticulum membranes. By mediating the proper cotranslational insertion of N-terminal transmembrane domains in an N-exo topology, with translocated N-terminus in the lumen of the ER, controls the topology of multi-pass membrane proteins like the G protein-coupled receptors. By regulating the insertion of various proteins in membranes, it is indirectly involved in many cellular processes. May be involved in Mg(2+) transport. The sequence is that of ER membrane protein complex subunit 5 from Danio rerio (Zebrafish).